Consider the following 442-residue polypeptide: Glutamate synthase large subunit-like protein (442 aa).

Residues 108-133 (LGRGATASGTSTTTGDGGMTDEERGH) are disordered. The segment covering 109–121 (GRGATASGTSTTT) has biased composition (low complexity).

It belongs to the glutamate synthase family.

The chain is Glutamate synthase large subunit-like protein (glxD) from Rhizobium meliloti (strain 1021) (Ensifer meliloti).